The following is a 1310-amino-acid chain: Major viral transcription factor ICP4 homolog (1310 aa).

3 disordered regions span residues 117-271 (AGAR…GPVE), 285-454 (GAKA…TPII), and 636-697 (GSSP…LLDK). The segment covering 341–350 (PVEKKPKSRE) has biased composition (basic and acidic residues). Low complexity-rich tracts occupy residues 351–364 (FVSS…WGSS), 392–407 (PSPS…DGGS), and 648–666 (PSPT…SAAA). Residues 677–685 (RLRTPRKRK) carry the Nuclear localization signal motif. Phosphoserine; by viral VZV ORF66 occurs at positions 686 and 722. Disordered regions lie at residues 1193 to 1258 (GTRF…SFGV) and 1282 to 1310 (ELLS…QSRG). Basic and acidic residues predominate over residues 1217 to 1227 (RTADDREHALE). Residues 1228–1250 (LDDWEVGCEDAWDSEEGGGDDGD) are compositionally biased toward acidic residues.

It belongs to the herpesviridae ICP4 family. Interacts with IE4 and IE63. Interacts with host USF1 and SP1. In terms of processing, phosphorylated by ORF66 protein kinase on Ser-686 and Ser-722. Also phosphorylated by ORF47 protein kinase and by human CSNK2A1/CKII.

The protein resides in the host nucleus. It localises to the host cytoplasm. The protein localises to the virion tegument. Functionally, transcriptional transactivator. May interact with and recruit specific components of the general transcription machinery to viral promoters and stabilize their formation for transcription initiation. Negatively regulates its own transcription. This immediate early (EI) protein may be necessary in virion for viral pathogenesis. This Homo sapiens (Human) protein is Major viral transcription factor ICP4 homolog.